A 959-amino-acid polypeptide reads, in one-letter code: MRVRGGQEAAQDKETSLDSDEERGRRGLRQTTLLDYMAGPAKPKKPEPPPTLHREREPESKYQNTLPETTGKEPASMSLRRNQPSSKHEEYNSESGDVRGLTLEPSPQSELSDDDVILELVREPWVESVRGYLLDVRYDGSLGKAVLMLYDPSSGSLVKWADRTGHKPYFLTDARPEDLRAAGVDVSHDESFLQYDLVEKFHPIDRKLVKLTKIVVSDPLAVRRLREKVSSAGFSVWEADIKYHHNYIFDRQLIPGILYEVGGVRIVHTLPLEMDDATRIVDEIFREEPREVRERAREWLRIFEAPPPKLPLIAFDIEVYSPIATRLPDPSTAPYPVISAATADSSGRSRVVLLYRDGVEFTEGALPEGTEVEIYDSERAMLLDLVRILQRYPLVVSFNGDNFDLPYIARRLEVLGVPREFAPIELKQDYATFRRSLHIDLHKLFGIRALQVYAFGNKYRELSLESISRALLGKGKVELKAPVSELNLNKLIEYNLQDARLTLELLTFSNNLVFNLIIMVMRTSKLGIEDITRSQISNWIRGLMYWEHRRRRWLIPSRGEIEKLSSAGARVGAIIKDKKYRGAIVLDPPVGIFFRVLVLDFASLYPSLIKQWNLSYETVNNPNCRDTIEVPEVGHRVCREFKGISNEIVGMLRDFRVRLYKKKSKDKSLREEERLWYDVVQSAMKVYINASYGVFGSEKFSLYSLPVAESVTALGRAVLRGTLEKSRELNLHIVYGDTDSLFIWDPPKDVLNDLVDYVERTYGLELELDKVFRAILFSGLKKNYLGITEEGDIVIKGMVAKKSNTPEFIKDEFSKAVKILSKLEKPEDVEAILAELRDHINTVYNNVKKKVYTLDQFAIKVMLSKNPREYDKNTPQHVKAAMLLQRLGLTLSRGDIVYYVKTRDKLGVKPVQLARLSDVDPGKYVEHVKTAFEQMLMAFGISWDDISGVRKLDRLLFDS.

Positions 1 to 110 (MRVRGGQEAA…LTLEPSPQSE (110 aa)) are disordered. The span at 44 to 60 (KKPEPPPTLHREREPES) shows a compositional bias: basic and acidic residues.

Belongs to the DNA polymerase type-B family.

The enzyme catalyses DNA(n) + a 2'-deoxyribonucleoside 5'-triphosphate = DNA(n+1) + diphosphate. The polypeptide is DNA polymerase 1 (polA) (Aeropyrum pernix (strain ATCC 700893 / DSM 11879 / JCM 9820 / NBRC 100138 / K1)).